We begin with the raw amino-acid sequence, 73 residues long: Translation initiation factor IF-1 (73 aa).

The 73-residue stretch at 1–73 (MAKKDGVIEI…TRGRIVYRYK (73 aa)) folds into the S1-like domain.

This sequence belongs to the IF-1 family. In terms of assembly, component of the 30S ribosomal translation pre-initiation complex which assembles on the 30S ribosome in the order IF-2 and IF-3, IF-1 and N-formylmethionyl-tRNA(fMet); mRNA recruitment can occur at any time during PIC assembly.

The protein resides in the cytoplasm. One of the essential components for the initiation of protein synthesis. Stabilizes the binding of IF-2 and IF-3 on the 30S subunit to which N-formylmethionyl-tRNA(fMet) subsequently binds. Helps modulate mRNA selection, yielding the 30S pre-initiation complex (PIC). Upon addition of the 50S ribosomal subunit IF-1, IF-2 and IF-3 are released leaving the mature 70S translation initiation complex. The polypeptide is Translation initiation factor IF-1 (Arthrobacter sp. (strain FB24)).